The chain runs to 73 residues: NAD(P)H-quinone oxidoreductase subunit L (73 aa).

The next 2 membrane-spanning stretches (helical) occupy residues 7 to 27 and 44 to 64; these read LIGLTYAALAVLYLLVLPFLF and VLMFFLVLFFFPGMVLVAPFM.

The protein belongs to the complex I NdhL subunit family. NDH-1 can be composed of about 15 different subunits; different subcomplexes with different compositions have been identified which probably have different functions.

The protein resides in the cellular thylakoid membrane. It carries out the reaction a plastoquinone + NADH + (n+1) H(+)(in) = a plastoquinol + NAD(+) + n H(+)(out). The catalysed reaction is a plastoquinone + NADPH + (n+1) H(+)(in) = a plastoquinol + NADP(+) + n H(+)(out). NDH-1 shuttles electrons from an unknown electron donor, via FMN and iron-sulfur (Fe-S) centers, to quinones in the respiratory and/or the photosynthetic chain. The immediate electron acceptor for the enzyme in this species is believed to be plastoquinone. Couples the redox reaction to proton translocation, and thus conserves the redox energy in a proton gradient. Cyanobacterial NDH-1 also plays a role in inorganic carbon-concentration. The polypeptide is NAD(P)H-quinone oxidoreductase subunit L (Synechococcus sp. (strain JA-3-3Ab) (Cyanobacteria bacterium Yellowstone A-Prime)).